The primary structure comprises 501 residues: ATP synthase subunit alpha (501 aa).

169 to 176 lines the ATP pocket; the sequence is GDRQTGKT.

The protein belongs to the ATPase alpha/beta chains family. F-type ATPases have 2 components, CF(1) - the catalytic core - and CF(0) - the membrane proton channel. CF(1) has five subunits: alpha(3), beta(3), gamma(1), delta(1), epsilon(1). CF(0) has three main subunits: a(1), b(2) and c(9-12). The alpha and beta chains form an alternating ring which encloses part of the gamma chain. CF(1) is attached to CF(0) by a central stalk formed by the gamma and epsilon chains, while a peripheral stalk is formed by the delta and b chains.

Its subcellular location is the cell membrane. The catalysed reaction is ATP + H2O + 4 H(+)(in) = ADP + phosphate + 5 H(+)(out). In terms of biological role, produces ATP from ADP in the presence of a proton gradient across the membrane. The alpha chain is a regulatory subunit. This is ATP synthase subunit alpha from Streptococcus pneumoniae serotype 4 (strain ATCC BAA-334 / TIGR4).